The primary structure comprises 337 residues: tRNA N6-adenosine threonylcarbamoyltransferase (337 aa).

Residues H111 and H115 each coordinate Fe cation. Residues L134–G138, D167, G180, and N272 each bind substrate. D300 serves as a coordination point for Fe cation.

It belongs to the KAE1 / TsaD family. It depends on Fe(2+) as a cofactor.

The protein localises to the cytoplasm. It catalyses the reaction L-threonylcarbamoyladenylate + adenosine(37) in tRNA = N(6)-L-threonylcarbamoyladenosine(37) in tRNA + AMP + H(+). Functionally, required for the formation of a threonylcarbamoyl group on adenosine at position 37 (t(6)A37) in tRNAs that read codons beginning with adenine. Is involved in the transfer of the threonylcarbamoyl moiety of threonylcarbamoyl-AMP (TC-AMP) to the N6 group of A37, together with TsaE and TsaB. TsaD likely plays a direct catalytic role in this reaction. This Aeromonas hydrophila subsp. hydrophila (strain ATCC 7966 / DSM 30187 / BCRC 13018 / CCUG 14551 / JCM 1027 / KCTC 2358 / NCIMB 9240 / NCTC 8049) protein is tRNA N6-adenosine threonylcarbamoyltransferase.